The sequence spans 84 residues: Putative ribosomal RNA large subunit methyltransferase H 2 (84 aa).

S-adenosyl-L-methionine contacts are provided by residues Gly33 and 52–57 (FSKMTF).

This sequence belongs to the RNA methyltransferase RlmH family. As to quaternary structure, homodimer.

Its subcellular location is the cytoplasm. The enzyme catalyses pseudouridine(1915) in 23S rRNA + S-adenosyl-L-methionine = N(3)-methylpseudouridine(1915) in 23S rRNA + S-adenosyl-L-homocysteine + H(+). Specifically methylates the pseudouridine at position 1915 (m3Psi1915) in 23S rRNA. In Clostridium perfringens (strain SM101 / Type A), this protein is Putative ribosomal RNA large subunit methyltransferase H 2 (rlmH2).